Reading from the N-terminus, the 566-residue chain is Poly(A) polymerase pla1 (566 aa).

ATP is bound by residues 86–88 (YGS), 99–101 (DID), Asp153, Lys214, Tyr223, and 232–233 (GV). Residues Asp99, Asp101, and Asp153 each contribute to the Mg(2+) site. 2 disordered regions span residues 437-463 (HEKLANDTVNEEKADNTESKADGSENG) and 530-566 (DEVFEPGEERPKATKKRSTADTAHSTEQLKRQKVSTA).

It belongs to the poly(A) polymerase family. Requires Mg(2+) as cofactor. The cofactor is Mn(2+).

The protein localises to the nucleus. The catalysed reaction is RNA(n) + ATP = RNA(n)-3'-adenine ribonucleotide + diphosphate. Polymerase that creates the 3'-poly(A) tail of mRNA's. May acquire specificity through interaction with a cleavage and polyadenylation factor (CF I). This is Poly(A) polymerase pla1 (pla1) from Schizosaccharomyces pombe (strain 972 / ATCC 24843) (Fission yeast).